We begin with the raw amino-acid sequence, 499 residues long: Glycerol kinase (499 aa).

Position 13 (Thr13) interacts with ADP. 3 residues coordinate ATP: Thr13, Thr14, and Ser15. Thr13 contributes to the sn-glycerol 3-phosphate binding site. Position 17 (Arg17) interacts with ADP. Sn-glycerol 3-phosphate is bound by residues Arg83, Glu84, Tyr135, and Asp245. The glycerol site is built by Arg83, Glu84, Tyr135, Asp245, and Gln246. ADP contacts are provided by Thr267 and Gly310. Residues Thr267, Gly310, Gln314, and Gly411 each contribute to the ATP site. Positions 411 and 415 each coordinate ADP.

Belongs to the FGGY kinase family. Homotetramer and homodimer (in equilibrium).

It carries out the reaction glycerol + ATP = sn-glycerol 3-phosphate + ADP + H(+). Its pathway is polyol metabolism; glycerol degradation via glycerol kinase pathway; sn-glycerol 3-phosphate from glycerol: step 1/1. With respect to regulation, activated by phosphorylation and inhibited by fructose 1,6-bisphosphate (FBP). Its function is as follows. Key enzyme in the regulation of glycerol uptake and metabolism. Catalyzes the phosphorylation of glycerol to yield sn-glycerol 3-phosphate. This Halothermothrix orenii (strain H 168 / OCM 544 / DSM 9562) protein is Glycerol kinase.